The chain runs to 555 residues: Glucose-6-phosphate isomerase (555 aa).

D-glucose 6-phosphate-binding positions include 169–170 (GS), 219–224 (SKTFTT), Gln364, Glu368, His399, and Lys521. Glu368 functions as the Proton donor in the catalytic mechanism. Catalysis depends on residues His399 and Lys521.

Belongs to the GPI family. Homodimer.

It localises to the cytoplasm. The protein resides in the cytosol. It carries out the reaction alpha-D-glucose 6-phosphate = beta-D-fructose 6-phosphate. It participates in carbohydrate degradation; glycolysis; D-glyceraldehyde 3-phosphate and glycerone phosphate from D-glucose: step 2/4. In the cytoplasm, catalyzes the conversion of glucose-6-phosphate to fructose-6-phosphate, the second step in glycolysis, and the reverse reaction during gluconeogenesis. In Kluyveromyces lactis (strain ATCC 8585 / CBS 2359 / DSM 70799 / NBRC 1267 / NRRL Y-1140 / WM37) (Yeast), this protein is Glucose-6-phosphate isomerase (RAG2).